The sequence spans 449 residues: Streptomycin-6-phosphate phosphatase (449 aa).

A signal peptide spans 1–32 (MRFAYGRLPWRRGAVLGSALLVLVTAPAASTA). Asp-50 provides a ligand contact to Mg(2+). A Zn(2+)-binding site is contributed by Asp-50. The active-site Phosphoserine intermediate is the Ser-99. Positions 151 and 153 each coordinate Mg(2+). Residues 268–290 (APGGTAPQRCATRNPGRPAGTPD) are disordered. Glu-321 contacts Mg(2+). Residues Asp-326, His-330, Asp-368, His-369, and His-412 each coordinate Zn(2+).

Belongs to the alkaline phosphatase family. It depends on Mg(2+) as a cofactor. Zn(2+) is required as a cofactor.

The protein localises to the secreted. The enzyme catalyses streptomycin 6-phosphate + H2O = streptomycin + phosphate. It functions in the pathway antibiotic biosynthesis; streptomycin biosynthesis. In terms of biological role, specifically cleaves both streptomycin-6-phosphate and, more slowly, streptomycin-3''-phosphate during the biosynthesis of streptomycin. The protein is Streptomycin-6-phosphate phosphatase (strK) of Streptomyces griseus.